A 373-amino-acid chain; its full sequence is Extensin-1 (373 aa).

The signal sequence occupies residues 1-19 (MASFLVLAFSLAFVSQTTA). A run of 36 repeats spans residues 25 to 33 (SPPPPVKHY), 34 to 40 (SPPPVYK), 41 to 49 (SPPPPVKHY), 50 to 56 (SPPPVYK), 57 to 65 (SPPPPVKHY), 66 to 72 (SPPPVYK), 73 to 81 (SPPPPVKYY), 82 to 88 (SPPPVYK), 97 to 105 (SPPPPVKHY), 106 to 112 (SPPPVYK), 113 to 121 (SPPPPVKHY), 122 to 128 (SPPPVYK), 129 to 137 (SPPPPVKHY), 138 to 144 (SPPPVYK), 145 to 153 (SPPPPVKHY), 154 to 160 (SPPPVYK), 161 to 169 (SPPPPVKYY), 170 to 176 (SPPPVYK), 177 to 185 (SPPPPVKHY), 186 to 192 (SPPPVYK), 193 to 201 (SPPPPVKYY), 202 to 208 (SPPPVYK), 209 to 217 (SPPPPVKHY), 218 to 224 (SPPPVYK), 225 to 233 (SPPPPVKYY), 234 to 240 (SPPPVYK), 241 to 248 (SPPPPVHY), 249 to 256 (SPPPVVYH), 257 to 264 (SPPPPVHY), 265 to 272 (SPPPVVYH), 273 to 280 (SPPPPVHY), 281 to 288 (SPPPVVYH), 289 to 296 (SPPPPVHY), 297 to 304 (SPPPVVYH), 305 to 312 (SPPPPVHY), and 313 to 320 (SPPPVVYH). The interval 25-233 (SPPPPVKHYS…KSPPPPVKYY (209 aa)) is 13 X 9 AA repeats of S-P-P-P-P-V-K-[HY]-Y. A 13 X 7 AA repeats of S-P-P-P-V-Y-K region spans residues 34-240 (SPPPVYKSPP…KYYSPPPVYK (207 aa)). Residues 241–312 (SPPPPVHYSP…YHSPPPPVHY (72 aa)) form a 5 X 8 AA repeats of S-P-P-P-P-V-H-Y region. The 5 X 8 AA repeats of S-P-P-P-V-V-Y-H stretch occupies residues 249-320 (SPPPVVYHSP…HYSPPPVVYH (72 aa)). Isodityrosine cross-linking regions lie at residues 329 to 332 (YEYK) and 363 to 366 (YLYK). The disordered stretch occupies residues 349 to 373 (PPPPVHHYSPPHQPYLYKSPPPPHY).

It belongs to the extensin family. Extensins contain a characteristic repeat of the pentapeptide Ser-Pro(4). For this particular extensin, a typical repeat of Ser-Pro(3) is found. In both cases, the proline residues are hydroxylated and then O-glycosylated (arabinosylation). In terms of processing, synthetised as soluble proteins which become insolubilised in the cell wall through the intermolecular cross-linking of Tyr on adjacent monomers. Isodityrosine (IDT) stabilizes and makes rigid the part of the polypeptide where IDT functional sites are present. As to expression, predominantly expressed in the roots. Not detected in the leaves, nor in flowers or flower buds. Wounding reverses this pattern, turning on the gene in the leaves and repressing it in the roots.

The protein localises to the secreted. It is found in the primary cell wall. In terms of biological role, structural component which strengthens the primary cell wall. The chain is Extensin-1 from Arabidopsis thaliana (Mouse-ear cress).